The chain runs to 274 residues: Energy-coupling factor transporter ATP-binding protein EcfA1 (274 aa).

Residues 11–245 (IELKNVKFKY…ERVIEIAKID (235 aa)) enclose the ABC transporter domain. An ATP-binding site is contributed by 45–52 (GHNGSGKS).

It belongs to the ABC transporter superfamily. Energy-coupling factor EcfA family. In terms of assembly, forms a stable energy-coupling factor (ECF) transporter complex composed of 2 membrane-embedded substrate-binding proteins (S component), 2 ATP-binding proteins (A component) and 2 transmembrane proteins (T component).

Its subcellular location is the cell membrane. Its function is as follows. ATP-binding (A) component of a common energy-coupling factor (ECF) ABC-transporter complex. Unlike classic ABC transporters this ECF transporter provides the energy necessary to transport a number of different substrates. The chain is Energy-coupling factor transporter ATP-binding protein EcfA1 from Mycoplasma mobile (strain ATCC 43663 / 163K / NCTC 11711) (Mesomycoplasma mobile).